A 380-amino-acid chain; its full sequence is Queuine tRNA-ribosyltransferase (380 aa).

The active-site Proton acceptor is D93. Substrate is bound by residues D93–F97, D147, Q198, and G225. An RNA binding region spans residues G256–N262. D275 serves as the catalytic Nucleophile. The interval A280–R284 is RNA binding; important for wobble base 34 recognition. Residues C313, C315, C318, and H344 each coordinate Zn(2+).

The protein belongs to the queuine tRNA-ribosyltransferase family. In terms of assembly, homodimer. Within each dimer, one monomer is responsible for RNA recognition and catalysis, while the other monomer binds to the replacement base PreQ1. The cofactor is Zn(2+).

It carries out the reaction 7-aminomethyl-7-carbaguanine + guanosine(34) in tRNA = 7-aminomethyl-7-carbaguanosine(34) in tRNA + guanine. It functions in the pathway tRNA modification; tRNA-queuosine biosynthesis. Catalyzes the base-exchange of a guanine (G) residue with the queuine precursor 7-aminomethyl-7-deazaguanine (PreQ1) at position 34 (anticodon wobble position) in tRNAs with GU(N) anticodons (tRNA-Asp, -Asn, -His and -Tyr). Catalysis occurs through a double-displacement mechanism. The nucleophile active site attacks the C1' of nucleotide 34 to detach the guanine base from the RNA, forming a covalent enzyme-RNA intermediate. The proton acceptor active site deprotonates the incoming PreQ1, allowing a nucleophilic attack on the C1' of the ribose to form the product. After dissociation, two additional enzymatic reactions on the tRNA convert PreQ1 to queuine (Q), resulting in the hypermodified nucleoside queuosine (7-(((4,5-cis-dihydroxy-2-cyclopenten-1-yl)amino)methyl)-7-deazaguanosine). This Clostridium perfringens (strain ATCC 13124 / DSM 756 / JCM 1290 / NCIMB 6125 / NCTC 8237 / Type A) protein is Queuine tRNA-ribosyltransferase.